Reading from the N-terminus, the 365-residue chain is Serine/threonine-protein phosphatase 2A activator 1 (365 aa).

The tract at residues 321-349 is disordered; sequence YEAPSETSEKPAAGTAHTTTTTMPPPRMT. The span at 331–342 shows a compositional bias: low complexity; it reads PAAGTAHTTTTT.

It belongs to the PTPA-type PPIase family.

The protein localises to the cytoplasm. It is found in the nucleus. The enzyme catalyses [protein]-peptidylproline (omega=180) = [protein]-peptidylproline (omega=0). PPIases accelerate the folding of proteins. It catalyzes the cis-trans isomerization of proline imidic peptide bonds in oligopeptides. Acts as a regulatory subunit for PP2A-like phosphatases modulating their activity or substrate specificity, probably by inducing a conformational change in the catalytic subunit, a direct target of the PPIase. Can reactivate inactive phosphatase PP2A-phosphatase methylesterase complexes (PP2Ai) in presence of ATP and Mg(2+) by dissociating the inactive form from the complex. This is Serine/threonine-protein phosphatase 2A activator 1 (RRD1) from Eremothecium gossypii (strain ATCC 10895 / CBS 109.51 / FGSC 9923 / NRRL Y-1056) (Yeast).